Consider the following 214-residue polypeptide: Phosphoenolpyruvate guanylyltransferase 2 (214 aa).

Phosphoenolpyruvate-binding residues include Thr135, Gly150, and Ser153.

It belongs to the CofC family.

It carries out the reaction phosphoenolpyruvate + GTP + H(+) = enolpyruvoyl-2-diphospho-5'-guanosine + diphosphate. It participates in cofactor biosynthesis; coenzyme F420 biosynthesis. Guanylyltransferase that catalyzes the activation of phosphoenolpyruvate (PEP) as enolpyruvoyl-2-diphospho-5'-guanosine, via the condensation of PEP with GTP. It is involved in the biosynthesis of coenzyme F420, a hydride carrier cofactor. This chain is Phosphoenolpyruvate guanylyltransferase 2, found in Rhodococcus jostii (strain RHA1).